A 454-amino-acid chain; its full sequence is Bifunctional protein GlmU (454 aa).

A pyrophosphorylase region spans residues 1–225; sequence MNIVILAAGM…LWETLGVNSK (225 aa). UDP-N-acetyl-alpha-D-glucosamine contacts are provided by residues 6–9, K20, Q71, 76–77, 98–100, G135, E150, N165, and N223; these read LAAG, GT, and YGD. D100 provides a ligand contact to Mg(2+). Position 223 (N223) interacts with Mg(2+). The tract at residues 226 to 246 is linker; sequence VQLAEIERIHQRNIAQRLLEA. Residues 247–454 are N-acetyltransferase; sequence GVTLLDPARI…WQRPVKQPKK (208 aa). Residues R329 and K347 each coordinate UDP-N-acetyl-alpha-D-glucosamine. H359 serves as the catalytic Proton acceptor. Residues Y362 and N373 each coordinate UDP-N-acetyl-alpha-D-glucosamine. Acetyl-CoA is bound by residues A376, 382–383, S401, A419, and R436; that span reads NY.

In the N-terminal section; belongs to the N-acetylglucosamine-1-phosphate uridyltransferase family. It in the C-terminal section; belongs to the transferase hexapeptide repeat family. Homotrimer. The cofactor is Mg(2+).

It is found in the cytoplasm. The catalysed reaction is alpha-D-glucosamine 1-phosphate + acetyl-CoA = N-acetyl-alpha-D-glucosamine 1-phosphate + CoA + H(+). It catalyses the reaction N-acetyl-alpha-D-glucosamine 1-phosphate + UTP + H(+) = UDP-N-acetyl-alpha-D-glucosamine + diphosphate. It participates in nucleotide-sugar biosynthesis; UDP-N-acetyl-alpha-D-glucosamine biosynthesis; N-acetyl-alpha-D-glucosamine 1-phosphate from alpha-D-glucosamine 6-phosphate (route II): step 2/2. It functions in the pathway nucleotide-sugar biosynthesis; UDP-N-acetyl-alpha-D-glucosamine biosynthesis; UDP-N-acetyl-alpha-D-glucosamine from N-acetyl-alpha-D-glucosamine 1-phosphate: step 1/1. The protein operates within bacterial outer membrane biogenesis; LPS lipid A biosynthesis. In terms of biological role, catalyzes the last two sequential reactions in the de novo biosynthetic pathway for UDP-N-acetylglucosamine (UDP-GlcNAc). The C-terminal domain catalyzes the transfer of acetyl group from acetyl coenzyme A to glucosamine-1-phosphate (GlcN-1-P) to produce N-acetylglucosamine-1-phosphate (GlcNAc-1-P), which is converted into UDP-GlcNAc by the transfer of uridine 5-monophosphate (from uridine 5-triphosphate), a reaction catalyzed by the N-terminal domain. In Cupriavidus metallidurans (strain ATCC 43123 / DSM 2839 / NBRC 102507 / CH34) (Ralstonia metallidurans), this protein is Bifunctional protein GlmU.